The chain runs to 173 residues: Protein PLASTID REDOX INSENSITIVE 2, chloroplastic (173 aa).

A chloroplast-targeting transit peptide spans 1–55 (MATRAWVAAAVALNPQLLPLRSCSPTKSVSPAQRSASMGLRLRSGRPCLGKFVCR).

Its subcellular location is the plastid. The protein resides in the chloroplast stroma. It localises to the chloroplast nucleoid. Functionally, required for the activity of the plastid-encoded RNA polymerase (PEP) and full expression of genes transcribed by PEP. The polypeptide is Protein PLASTID REDOX INSENSITIVE 2, chloroplastic (Zea mays (Maize)).